The following is a 458-amino-acid chain: Monomethylamine methyltransferase MtmB1 (458 aa).

A non-standard amino acid (pyrrolysine) is located at residue O202.

It belongs to the monomethylamine methyltransferase family.

It catalyses the reaction Co(I)-[methylamine-specific corrinoid protein] + methylamine + H(+) = methyl-Co(III)-[methylamine-specific corrinoid protein] + NH4(+). It participates in one-carbon metabolism; methanogenesis from methylamine. Catalyzes the transfer of the methyl group from monomethylamine to the corrinoid cofactor of MtmC. The chain is Monomethylamine methyltransferase MtmB1 (mtmB1) from Methanosarcina barkeri (strain Fusaro / DSM 804).